Here is a 311-residue protein sequence, read N- to C-terminus: MSNSIVIQTNSTVIEDMKQQYKHSLSPKTPQGGIFMAKVPSCTITAYKSGKVMFQGGRAEAEAARWQTVPQTPKIAVKKSVDSHRYAPPASIGTMSIVGSDEVGTGDFFGPMTVVAVYVDAKQIPLLKELGVKDSKNLNDEQITAIAKQLLHVVPYSSLVLHNEKYNELFDKGNNQGKLKALLHNKAITNLLAKIAPTKPEGVLIDQFTQPDTYYKYLAKQKQVQRENVYFATKGESVHLAVAAASILARYSFVKQFNELSKKAGMPLPKGAGKQVDIAAAKLIQKLGKERLPEFVKLHFANTEKAFRLLK.

Positions 95–311 constitute an RNase H type-2 domain; the sequence is MSIVGSDEVG…NTEKAFRLLK (217 aa). Positions 101, 102, and 206 each coordinate a divalent metal cation.

This sequence belongs to the RNase HII family. RnhC subfamily. The cofactor is Mn(2+). Requires Mg(2+) as cofactor.

The protein localises to the cytoplasm. It carries out the reaction Endonucleolytic cleavage to 5'-phosphomonoester.. In terms of biological role, endonuclease that specifically degrades the RNA of RNA-DNA hybrids. This Bacillus anthracis (strain A0248) protein is Ribonuclease HIII.